Consider the following 885-residue polypeptide: 3-hydroxy-3-methylglutaryl-coenzyme A reductase (885 aa).

Topologically, residues 1–9 (MLSRLFRMH) are cytoplasmic. The chain crosses the membrane as a helical span at residues 10–39 (GLFVASHPWEVIVGTVTLTICMMSMNMFTG). Residues 40–56 (NDKICGWNYECPKFEED) lie on the Lumenal side of the membrane. Residues 57–78 (VLSSDIIILTITRCIAILYIYF) form a helical membrane-spanning segment. Positions 61-218 (DIIILTITRC…MTFFPACVSL (158 aa)) constitute an SSD domain. The INSIG-binding motif signature appears at 75–78 (YIYF). At 79–89 (QFQNLRQLGSK) the chain is on the cytoplasmic side. Lys89 is covalently cross-linked (Glycyl lysine isopeptide (Lys-Gly) (interchain with G-Cter in ubiquitin)). Residues 90–114 (YILGIAGLFTIFSSFVFSTVVIHFL) form a helical membrane-spanning segment. The Lumenal segment spans residues 115–123 (DKELTGLNE). The helical transmembrane segment at 124-149 (ALPFFLLLIDLSRASALAKFALSSNS) threads the bilayer. Residues 150–159 (QDEVRENIAR) are Cytoplasmic-facing. The helical transmembrane segment at 160 to 187 (GMAILGPTFTLDALVECLVIGVGTMSGV) threads the bilayer. At 188 to 191 (RQLE) the chain is on the lumenal side. A helical membrane pass occupies residues 192–220 (IMCCFGCMSVLATYFVFMTFFPACVSLVL). Residues 221–248 (ELSRESREGRPIWQLSHFARVLEGEENK) are Cytoplasmic-facing. Lys248 participates in a covalent cross-link: Glycyl lysine isopeptide (Lys-Gly) (interchain with G-Cter in ubiquitin). A helical membrane pass occupies residues 249 to 275 (PNPVTQRVKIIMSLGLVLVHAHSRWIA). Residues 276–314 (DPSPQNSTADNSKVSLGLDENVSKRIEPSVSLWQFYLSK) are Lumenal-facing. Residues Asn281 and Asn296 are each glycosylated (N-linked (GlcNAc...) asparagine). A helical membrane pass occupies residues 315-339 (MISMDIEQVITLTLALLLAVKYIFF). The Cytoplasmic portion of the chain corresponds to 340 to 885 (EQAETESTLS…LQGTCTKKAA (546 aa)). Catalysis depends on charge relay system residues Glu558, Lys688, and Asp764. Catalysis depends on His863, which acts as the Proton donor. Ser869 is subject to Phosphoserine; by AMPK.

The protein belongs to the HMG-CoA reductase family. As to quaternary structure, homotetramer. Homodimer. Interacts (via its SSD) with INSIG1; the interaction, accelerated by sterols, leads to the recruitment of HMGCR to AMFR/gp78 for its ubiquitination by the sterol-mediated ERAD pathway. Interacts with UBIAD1. Undergoes sterol-mediated ubiquitination and ER-associated degradation (ERAD). Accumulation of sterols in the endoplasmic reticulum (ER) membrane, triggers binding of the reductase to the ER membrane protein INSIG1 or INSIG2. The INSIG1 binding leads to the recruitment of the ubiquitin ligase, AMFR/gp78, RNF139 or RNF145, initiating ubiquitination of the reductase. The ubiquitinated reductase is then extracted from the ER membrane and delivered to cytosolic 26S proteosomes by a mechanism probably mediated by the ATPase Valosin-containing protein VCP/p97. The INSIG2-binding leads to the recruitment of the ubiquitin ligase RNF139, initiating ubiquitination of the reductase. Lys-248 is the main site of ubiquitination. Ubiquitination is enhanced by the presence of a geranylgeranylated protein. Post-translationally, N-glycosylated. Deglycosylated by NGLY1 on release from the endoplasmic reticulum (ER) in a sterol-mediated manner. In terms of processing, phosphorylated. Phosphorylation at Ser-869 reduces the catalytic activity. High expression found in liver, heart, kidney, bladder and subcutaneous fat. Lower levels in lung, uterus and large intestine. Lowest levels in cerebrum, spleen, spinal cord, stomach, ovary, longissimus muscle, and small intestine.

The protein localises to the endoplasmic reticulum membrane. Its subcellular location is the peroxisome membrane. The enzyme catalyses (R)-mevalonate + 2 NADP(+) + CoA = (3S)-3-hydroxy-3-methylglutaryl-CoA + 2 NADPH + 2 H(+). It participates in metabolic intermediate biosynthesis; (R)-mevalonate biosynthesis; (R)-mevalonate from acetyl-CoA: step 3/3. With respect to regulation, regulated by a negative feedback mechanism through sterols and non-sterol metabolites derived from mevalonate. Phosphorylation at Ser-869 down-regulates the catalytic activity. In terms of biological role, catalyzes the conversion of (3S)-hydroxy-3-methylglutaryl-CoA (HMG-CoA) to mevalonic acid, the rate-limiting step in the synthesis of cholesterol and other isoprenoids, thus plays a critical role in cellular cholesterol homeostasis. The protein is 3-hydroxy-3-methylglutaryl-coenzyme A reductase (HMGCR) of Sus scrofa (Pig).